The chain runs to 114 residues: UPF0342 protein SSP0954 (114 aa).

This sequence belongs to the UPF0342 family.

This is UPF0342 protein SSP0954 from Staphylococcus saprophyticus subsp. saprophyticus (strain ATCC 15305 / DSM 20229 / NCIMB 8711 / NCTC 7292 / S-41).